The chain runs to 256 residues: Small ribosomal subunit protein eS1 (256 aa).

The span at 1–18 (MAVGKNKRLSKGKKGLKK) shows a compositional bias: basic residues. The tract at residues 1 to 20 (MAVGKNKRLSKGKKGLKKRT) is disordered. Ala2 bears the N-acetylalanine; partial mark.

Belongs to the eukaryotic ribosomal protein eS1 family. In terms of assembly, component of the small ribosomal subunit. Mature ribosomes consist of a small (40S) and a large (60S) subunit. The 40S subunit contains about 33 different proteins and 1 molecule of RNA (18S). The 60S subunit contains about 49 different proteins and 3 molecules of RNA (25S, 5.8S and 5S).

The protein resides in the cytoplasm. In Talaromyces marneffei (strain ATCC 18224 / CBS 334.59 / QM 7333) (Penicillium marneffei), this protein is Small ribosomal subunit protein eS1 (rps1).